Consider the following 358-residue polypeptide: Isopentenyl-diphosphate delta-isomerase (358 aa).

12-13 is a binding site for substrate; it reads RK. FMN-binding positions include 69-71, Ser-99, and Asn-128; that span reads AMT. Gln-158 serves as a coordination point for substrate. Glu-159 serves as a coordination point for Mg(2+). FMN contacts are provided by residues Lys-190, Thr-220, 267-269, and 288-289; these read GIR and AG.

It belongs to the IPP isomerase type 2 family. As to quaternary structure, homooctamer. Dimer of tetramers. The cofactor is FMN. Requires NADPH as cofactor. Mg(2+) is required as a cofactor.

The protein localises to the cytoplasm. It catalyses the reaction isopentenyl diphosphate = dimethylallyl diphosphate. Functionally, involved in the biosynthesis of isoprenoids. Catalyzes the 1,3-allylic rearrangement of the homoallylic substrate isopentenyl (IPP) to its allylic isomer, dimethylallyl diphosphate (DMAPP). The chain is Isopentenyl-diphosphate delta-isomerase from Listeria monocytogenes serovar 1/2a (strain ATCC BAA-679 / EGD-e).